A 240-amino-acid chain; its full sequence is Aspartate/glutamate leucyltransferase (240 aa).

Belongs to the R-transferase family. Bpt subfamily.

Its subcellular location is the cytoplasm. The catalysed reaction is N-terminal L-glutamyl-[protein] + L-leucyl-tRNA(Leu) = N-terminal L-leucyl-L-glutamyl-[protein] + tRNA(Leu) + H(+). It carries out the reaction N-terminal L-aspartyl-[protein] + L-leucyl-tRNA(Leu) = N-terminal L-leucyl-L-aspartyl-[protein] + tRNA(Leu) + H(+). Functions in the N-end rule pathway of protein degradation where it conjugates Leu from its aminoacyl-tRNA to the N-termini of proteins containing an N-terminal aspartate or glutamate. The polypeptide is Aspartate/glutamate leucyltransferase (Gluconobacter oxydans (strain 621H) (Gluconobacter suboxydans)).